A 152-amino-acid chain; its full sequence is UPF0260 protein BAB1_1496 (152 aa).

The protein belongs to the UPF0260 family.

This chain is UPF0260 protein BAB1_1496, found in Brucella abortus (strain 2308).